Reading from the N-terminus, the 361-residue chain is D-alanine--D-alanine ligase (361 aa).

Residues 134–344 form the ATP-grasp domain; that stretch reads KLLLKSFNIP…FKDLVDNLIN (211 aa). 167–222 is an ATP binding site; it reads REALGYPVIVKPAVLGSSIGINVAYSENQIEFFIEEALKYDLTILIEKFIEAREIE. The Mg(2+) site is built by D297, E311, and N313.

It belongs to the D-alanine--D-alanine ligase family. Mg(2+) is required as a cofactor. Requires Mn(2+) as cofactor.

The protein resides in the cytoplasm. It carries out the reaction 2 D-alanine + ATP = D-alanyl-D-alanine + ADP + phosphate + H(+). Its pathway is cell wall biogenesis; peptidoglycan biosynthesis. Its function is as follows. Cell wall formation. The protein is D-alanine--D-alanine ligase of Borrelia garinii subsp. bavariensis (strain ATCC BAA-2496 / DSM 23469 / PBi) (Borreliella bavariensis).